Here is a 415-residue protein sequence, read N- to C-terminus: Gamma-glutamyl phosphate reductase (415 aa).

The protein belongs to the gamma-glutamyl phosphate reductase family.

It localises to the cytoplasm. It catalyses the reaction L-glutamate 5-semialdehyde + phosphate + NADP(+) = L-glutamyl 5-phosphate + NADPH + H(+). It functions in the pathway amino-acid biosynthesis; L-proline biosynthesis; L-glutamate 5-semialdehyde from L-glutamate: step 2/2. Catalyzes the NADPH-dependent reduction of L-glutamate 5-phosphate into L-glutamate 5-semialdehyde and phosphate. The product spontaneously undergoes cyclization to form 1-pyrroline-5-carboxylate. This chain is Gamma-glutamyl phosphate reductase, found in Bacteroides fragilis (strain YCH46).